Here is a 248-residue protein sequence, read N- to C-terminus: E3 SUMO-protein ligase NSE2 (248 aa).

Methionine 1 carries the post-translational modification N-acetylmethionine. Glycyl lysine isopeptide (Lys-Gly) (interchain with G-Cter in SUMO2) cross-links involve residues lysine 92 and lysine 109. Residue serine 118 is modified to Phosphoserine. Residues lysine 127 and lysine 132 each participate in a glycyl lysine isopeptide (Lys-Gly) (interchain with G-Cter in SUMO2) cross-link. The SP-RING-type zinc-finger motif lies at 156-242; it reads VDEDMIVTQS…LRRAIESHKK (87 aa). Cysteine 187, histidine 189, cysteine 212, and cysteine 217 together coordinate Zn(2+).

The protein belongs to the NSE2 family. In terms of assembly, component of the SMC5-SMC6 complex which consists at least of SMC5, SMC6, NSMCE2, NSMCE1, NSMCE4A or EID3 and NSMCE3. In terms of processing, sumoylated, possibly via autosumoylation.

The protein resides in the nucleus. It is found in the chromosome. The protein localises to the telomere. Its subcellular location is the PML body. The protein operates within protein modification; protein sumoylation. E3 SUMO-protein ligase component of the SMC5-SMC6 complex, a complex involved in DNA double-strand break repair by homologous recombination. Is not be required for the stability of the complex. The complex may promote sister chromatid homologous recombination by recruiting the SMC1-SMC3 cohesin complex to double-strand breaks. Acts as an E3 ligase mediating SUMO attachment to various proteins such as SMC6L1 and TSNAX, the shelterin complex subunits TERF1, TERF2, TINF2 and TERF2IP, RAD51AP1, and maybe the cohesin components RAD21 and STAG2. Required for recruitment of telomeres to PML nuclear bodies. Required for sister chromatid cohesion during prometaphase and mitotic progression. The polypeptide is E3 SUMO-protein ligase NSE2 (NSMCE2) (Bos taurus (Bovine)).